Consider the following 245-residue polypeptide: Ribonuclease 3 (245 aa).

An RNase III domain is found at 19–148 (FKLFQEKIGI…FIGALYLDQG (130 aa)). Residue Glu-61 participates in Mg(2+) binding. Residue Asp-65 is part of the active site. Positions 134 and 137 each coordinate Mg(2+). Glu-137 is an active-site residue. In terms of domain architecture, DRBM spans 174-243 (DYKSQLQELI…AAEALKKLKE (70 aa)).

The protein belongs to the ribonuclease III family. Homodimer. The cofactor is Mg(2+).

It is found in the cytoplasm. The catalysed reaction is Endonucleolytic cleavage to 5'-phosphomonoester.. Functionally, digests double-stranded RNA. Involved in the processing of primary rRNA transcript to yield the immediate precursors to the large and small rRNAs (23S and 16S). Processes some mRNAs, and tRNAs when they are encoded in the rRNA operon. Processes pre-crRNA and tracrRNA of type II CRISPR loci if present in the organism. In Bacillus cereus (strain 03BB102), this protein is Ribonuclease 3.